The following is an 817-amino-acid chain: Putative receptor protein kinase ZmPK1 (817 aa).

The signal sequence occupies residues 1–28 (MPRPLAALLSTACILSFFIALFPRAASS). The Bulb-type lectin domain maps to 29–158 (RDILPLGSSL…GGNTVWQSFD (130 aa)). Topologically, residues 29–472 (RDILPLGSSL…HKTGGGESKW (444 aa)) are extracellular. 4 N-linked (GlcNAc...) asparagine glycosylation sites follow: Asn-83, Asn-128, Asn-228, and Asn-279. Residues 292-328 (MTQPCNIHGLCGPNGICHYSPTPTCSCPPGYATRNPG) enclose the EGF-like domain. Disulfide bonds link Cys-296–Cys-308 and Cys-302–Cys-316. N-linked (GlcNAc...) asparagine glycans are attached at residues Asn-329 and Asn-339. The region spanning 342 to 424 (CDRYDKRSMR…VRTIYLKLPT (83 aa)) is the PAN domain. Intrachain disulfides connect Cys-376-Cys-398 and Cys-384-Cys-386. N-linked (GlcNAc...) asparagine glycosylation is present at Asn-452. Residues 473-498 (FYFYGFIAAFFVVEVSFISFAWFFVL) form a helical membrane-spanning segment. Residues 499-817 (KRELRPSELW…AVQTLLSADD (319 aa)) are Cytoplasmic-facing. Residues 534-817 (RKFKVELGRG…AVQTLLSADD (284 aa)) enclose the Protein kinase domain. Residues 540 to 548 (LGRGESGTV) and Lys-562 each bind ATP. Asp-658 serves as the catalytic Proton acceptor.

This sequence belongs to the protein kinase superfamily. Ser/Thr protein kinase family. In terms of tissue distribution, expressed predominantly in the shoots and roots of young maize seedlings, and to a lesser extent in the silks.

It is found in the membrane. It catalyses the reaction L-seryl-[protein] + ATP = O-phospho-L-seryl-[protein] + ADP + H(+). The enzyme catalyses L-threonyl-[protein] + ATP = O-phospho-L-threonyl-[protein] + ADP + H(+). Its function is as follows. Probable receptor. Interaction with a ligand in the extracellular domain triggers the protein kinase activity of the cytoplasmic domain. The sequence is that of Putative receptor protein kinase ZmPK1 (PK1) from Zea mays (Maize).